An 80-amino-acid polypeptide reads, in one-letter code: Sec-independent protein translocase protein TatA (80 aa).

A helical membrane pass occupies residues 1-21 (MGISMWQLLIVLLIIVLLFGT). Residues 39–80 (KKAMSDGESEEDKEPKKLSQNESRTIEGSVERNDAKTESKHS) form a disordered region. Residues 67 to 80 (SVERNDAKTESKHS) show a composition bias toward basic and acidic residues.

Belongs to the TatA/E family. In terms of assembly, the Tat system comprises two distinct complexes: a TatABC complex, containing multiple copies of TatA, TatB and TatC subunits, and a separate TatA complex, containing only TatA subunits. Substrates initially bind to the TatABC complex, which probably triggers association of the separate TatA complex to form the active translocon.

It is found in the cell inner membrane. Functionally, part of the twin-arginine translocation (Tat) system that transports large folded proteins containing a characteristic twin-arginine motif in their signal peptide across membranes. TatA could form the protein-conducting channel of the Tat system. The polypeptide is Sec-independent protein translocase protein TatA (Hahella chejuensis (strain KCTC 2396)).